The primary structure comprises 132 residues: Small ribosomal subunit protein uS11 (132 aa).

Residues 1–16 (MAAGMKGKRSRRRKER) show a composition bias toward basic residues. Positions 1-20 (MAAGMKGKRSRRRKERKNVE) are disordered.

It belongs to the universal ribosomal protein uS11 family. Part of the 30S ribosomal subunit. Interacts with proteins S7 and S18. Binds to IF-3.

Located on the platform of the 30S subunit, it bridges several disparate RNA helices of the 16S rRNA. Forms part of the Shine-Dalgarno cleft in the 70S ribosome. In Clostridium botulinum (strain Kyoto / Type A2), this protein is Small ribosomal subunit protein uS11.